We begin with the raw amino-acid sequence, 495 residues long: Cytochrome P450 monooxygenase cnsC (495 aa).

Position 434 (Cys-434) interacts with heme.

Belongs to the cytochrome P450 family. Heme is required as a cofactor.

It participates in alkaloid biosynthesis. Its function is as follows. Cytochrome P450 monooxygenase; part of the gene cluster that mediates the biosynthesis of communesins, a prominent class of indole alkaloids with great potential as pharmaceuticals. Communesins are biosynthesized by the coupling of tryptamine and aurantioclavine, two building blocks derived from L-tryptophan. The L-tryptophan decarboxylase cnsB converts L-tryptophan to tryptamine, whereas the tryptophan dimethylallyltransferase cnsF converts L-tryptophan to 4-dimethylallyl tryptophan which is further transformed to aurantioclavine by the aurantioclavine synthase cnsA, probably aided by the catalase cnsD. The cytochrome P450 monooxygenase cnsC catalyzes the heterodimeric coupling between the two different indole moieties, tryptamine and aurantioclavine, to construct vicinal quaternary stereocenters and yield the heptacyclic communesin scaffold. The O-methyltransferase cnsE then methylates the communesin scaffold to produce communesin K, the simplest characterized communesin that contains the heptacyclic core. The dioxygenase cnsJ converts communesin K into communesin I. Acylation to introduce the hexadienyl group at position N16 of communesin I by the acyltransferase cnsK leads to the production of communesin B. The hexadienyl group is produced by the highly reducing polyketide synthase cnsI, before being hydrolytically removed from cnsI by the serine hydrolase cnsH, converted into hexadienyl-CoA by the CoA ligase cnsG, and then transferred to communesin I by cnsK. Surprisingly, cnsK may also be a promiscuous acyltransferase that can tolerate a range of acyl groups, including acetyl-, propionyl-, and butyryl-CoA, which lead to communesins A, G and H respectively. The roles of the alpha-ketoglutarate-dependent dioxygenases cnsM and cnsP have still to be determined. This chain is Cytochrome P450 monooxygenase cnsC, found in Penicillium expansum (Blue mold rot fungus).